Here is a 428-residue protein sequence, read N- to C-terminus: C4-dicarboxylate transport protein (428 aa).

9 consecutive transmembrane segments (helical) span residues 4 to 24 (SLFK…ILLG), 44 to 64 (LIKM…IAGM), 76 to 96 (VALL…LIIV), 142 to 162 (IGAF…LFGF), 184 to 204 (VIFG…FGAM), 222 to 242 (LIIC…GTIA), 289 to 309 (VVGL…SIYL), 326 to 346 (IFHQ…AAGV), and 352 to 372 (IVLA…LALI).

Belongs to the dicarboxylate/amino acid:cation symporter (DAACS) (TC 2.A.23) family.

It localises to the cell inner membrane. In terms of biological role, responsible for the transport of dicarboxylates such as succinate, fumarate, and malate from the periplasm across the membrane. This chain is C4-dicarboxylate transport protein, found in Salmonella arizonae (strain ATCC BAA-731 / CDC346-86 / RSK2980).